Reading from the N-terminus, the 283-residue chain is Orotidine 5'-phosphate decarboxylase (283 aa).

Substrate contacts are provided by residues aspartate 40, 62–64, 93–102, tyrosine 220, and arginine 239; these read KTH and DRKFADIGNT. Residue lysine 95 is the Proton donor of the active site.

Belongs to the OMP decarboxylase family.

It catalyses the reaction orotidine 5'-phosphate + H(+) = UMP + CO2. Its pathway is pyrimidine metabolism; UMP biosynthesis via de novo pathway; UMP from orotate: step 2/2. In Mycosarcoma maydis (Corn smut fungus), this protein is Orotidine 5'-phosphate decarboxylase (PYR6).